The chain runs to 263 residues: HTH-type transcriptional repressor NanR (263 aa).

Residues 30–98 form the HTH gntR-type domain; it reads KKLSEMVEEE…NGERARVSRP (69 aa). Positions 58–77 form a DNA-binding region, H-T-H motif; the sequence is ERELMAFFNVGRPSVREALA.

The protein belongs to the NanR family.

Transcriptional repressor that controls expression of the genes required for the catabolism of sialic acids. The sequence is that of HTH-type transcriptional repressor NanR from Salmonella arizonae (strain ATCC BAA-731 / CDC346-86 / RSK2980).